Consider the following 384-residue polypeptide: Putative glycosyltransferase EpsF (384 aa).

The protein belongs to the glycosyltransferase group 1 family. Glycosyltransferase 4 subfamily.

Its function is as follows. May be involved in the production of the exopolysaccharide (EPS) component of the extracellular matrix during biofilm formation. EPS is responsible for the adhesion of chains of cells into bundles. Required for biofilm maintenance. The polypeptide is Putative glycosyltransferase EpsF (epsF) (Bacillus subtilis (strain 168)).